A 65-amino-acid chain; its full sequence is Large ribosomal subunit protein uL30 (65 aa).

It belongs to the universal ribosomal protein uL30 family. As to quaternary structure, part of the 50S ribosomal subunit.

This Chloroflexus aurantiacus (strain ATCC 29366 / DSM 635 / J-10-fl) protein is Large ribosomal subunit protein uL30.